Here is a 67-residue protein sequence, read N- to C-terminus: DNA-directed RNA polymerase subunit omega (67 aa).

This sequence belongs to the RNA polymerase subunit omega family. The RNAP catalytic core consists of 2 alpha, 1 beta, 1 beta' and 1 omega subunit. When a sigma factor is associated with the core the holoenzyme is formed, which can initiate transcription.

It carries out the reaction RNA(n) + a ribonucleoside 5'-triphosphate = RNA(n+1) + diphosphate. Its function is as follows. Promotes RNA polymerase assembly. Latches the N- and C-terminal regions of the beta' subunit thereby facilitating its interaction with the beta and alpha subunits. This chain is DNA-directed RNA polymerase subunit omega, found in Burkholderia pseudomallei (strain 1106a).